The sequence spans 420 residues: Protein BDLF2 (420 aa).

2 disordered regions span residues 1 to 21 and 64 to 129; these read MVDE…SREE and AAAV…GGQR. The Intravirion portion of the chain corresponds to 1 to 184; that stretch reads MVDEQVAVEH…AETLAEPPRC (184 aa). Over residues 92–108 the composition is skewed to low complexity; it reads TNTQDQNQNQTTRARTN. A helical; Signal-anchor for type II membrane protein transmembrane segment spans residues 185–205; sequence FMLSFVFIYYCCYLAFLALLA. Over 206–420 the chain is Virion surface; that stretch reads FGFNPLFLPS…LEEVMYVMVQ (215 aa). N-linked (GlcNAc...) asparagine; by host glycosylation is found at asparagine 258, asparagine 264, asparagine 300, asparagine 304, asparagine 371, and asparagine 384.

This sequence belongs to the herpesviridae BDLF2 family. Interacts with BMRF2.

The protein resides in the virion membrane. In terms of biological role, rearranges cellular actin to increase intercellular contacts and thereby promote virus cell-to-cell spreading. Induce the outgrowth of long, branched plasma membrane fronds to create intercellular network for virion traffic. The fronds are actin based and RhoA-dependent. The chain is Protein BDLF2 from Epstein-Barr virus (strain GD1) (HHV-4).